The sequence spans 131 residues: Small ribosomal subunit protein eS24 (131 aa).

Met-1 carries the N-acetylmethionine modification. At Thr-9 the chain carries Phosphothreonine. Residue Lys-37 forms a Glycyl lysine isopeptide (Lys-Gly) (interchain with G-Cter in SUMO2) linkage. Basic and acidic residues predominate over residues 90 to 100 (RLARHGLYEKK). The segment at 90–131 (RLARHGLYEKKKTSRKQRKERKNRMKKVRGTAKANVGAGKKK) is disordered. A compositionally biased stretch (basic residues) spans 101 to 119 (KTSRKQRKERKNRMKKVRG).

The protein belongs to the eukaryotic ribosomal protein eS24 family. In terms of assembly, component of the small ribosomal subunit. Part of the small subunit (SSU) processome, composed of more than 70 proteins and the RNA chaperone small nucleolar RNA (snoRNA) U3.

Its subcellular location is the cytoplasm. It is found in the nucleus. The protein localises to the nucleolus. In terms of biological role, component of the small ribosomal subunit. The ribosome is a large ribonucleoprotein complex responsible for the synthesis of proteins in the cell. Required for processing of pre-rRNA and maturation of 40S ribosomal subunits. Part of the small subunit (SSU) processome, first precursor of the small eukaryotic ribosomal subunit. During the assembly of the SSU processome in the nucleolus, many ribosome biogenesis factors, an RNA chaperone and ribosomal proteins associate with the nascent pre-rRNA and work in concert to generate RNA folding, modifications, rearrangements and cleavage as well as targeted degradation of pre-ribosomal RNA by the RNA exosome. The chain is Small ribosomal subunit protein eS24 (RPS24) from Pongo abelii (Sumatran orangutan).